The primary structure comprises 299 residues: ATP phosphoribosyltransferase (299 aa).

The protein belongs to the ATP phosphoribosyltransferase family. Long subfamily. Requires Mg(2+) as cofactor.

The protein localises to the cytoplasm. The enzyme catalyses 1-(5-phospho-beta-D-ribosyl)-ATP + diphosphate = 5-phospho-alpha-D-ribose 1-diphosphate + ATP. It functions in the pathway amino-acid biosynthesis; L-histidine biosynthesis; L-histidine from 5-phospho-alpha-D-ribose 1-diphosphate: step 1/9. With respect to regulation, feedback inhibited by histidine. In terms of biological role, catalyzes the condensation of ATP and 5-phosphoribose 1-diphosphate to form N'-(5'-phosphoribosyl)-ATP (PR-ATP). Has a crucial role in the pathway because the rate of histidine biosynthesis seems to be controlled primarily by regulation of HisG enzymatic activity. In Shewanella woodyi (strain ATCC 51908 / MS32), this protein is ATP phosphoribosyltransferase.